A 160-amino-acid polypeptide reads, in one-letter code: MIP18 family protein F45G2.10 (160 aa).

A disordered region spans residues 1 to 32 (MGQERLDNANPTLFDSKPRHRPVTGTERDESV).

This sequence belongs to the MIP18 family.

May play a role in chromosome segregation through establishment of sister chromatid cohesion. This Caenorhabditis elegans protein is MIP18 family protein F45G2.10.